The chain runs to 195 residues: ATP-dependent Clp protease proteolytic subunit (195 aa).

Ser98 serves as the catalytic Nucleophile. His123 is an active-site residue.

The protein belongs to the peptidase S14 family. In terms of assembly, fourteen ClpP subunits assemble into 2 heptameric rings which stack back to back to give a disk-like structure with a central cavity, resembling the structure of eukaryotic proteasomes.

Its subcellular location is the cytoplasm. The enzyme catalyses Hydrolysis of proteins to small peptides in the presence of ATP and magnesium. alpha-casein is the usual test substrate. In the absence of ATP, only oligopeptides shorter than five residues are hydrolyzed (such as succinyl-Leu-Tyr-|-NHMec, and Leu-Tyr-Leu-|-Tyr-Trp, in which cleavage of the -Tyr-|-Leu- and -Tyr-|-Trp bonds also occurs).. In terms of biological role, cleaves peptides in various proteins in a process that requires ATP hydrolysis. Has a chymotrypsin-like activity. Plays a major role in the degradation of misfolded proteins. In Wolinella succinogenes (strain ATCC 29543 / DSM 1740 / CCUG 13145 / JCM 31913 / LMG 7466 / NCTC 11488 / FDC 602W) (Vibrio succinogenes), this protein is ATP-dependent Clp protease proteolytic subunit.